Reading from the N-terminus, the 60-residue chain is Large ribosomal subunit protein bL32 (60 aa).

Residues 1–28 are disordered; it reads MAVQQNKKSRSKRDMRRSHDALTGPTLS. The span at 7–16 shows a compositional bias: basic residues; the sequence is KKSRSKRDMR.

This sequence belongs to the bacterial ribosomal protein bL32 family.

The chain is Large ribosomal subunit protein bL32 from Cellvibrio japonicus (strain Ueda107) (Pseudomonas fluorescens subsp. cellulosa).